A 150-amino-acid polypeptide reads, in one-letter code: 3-hydroxyacyl-[acyl-carrier-protein] dehydratase FabZ (150 aa).

The active site involves H54.

It belongs to the thioester dehydratase family. FabZ subfamily.

It localises to the cytoplasm. It catalyses the reaction a (3R)-hydroxyacyl-[ACP] = a (2E)-enoyl-[ACP] + H2O. In terms of biological role, involved in unsaturated fatty acids biosynthesis. Catalyzes the dehydration of short chain beta-hydroxyacyl-ACPs and long chain saturated and unsaturated beta-hydroxyacyl-ACPs. This is 3-hydroxyacyl-[acyl-carrier-protein] dehydratase FabZ from Chromobacterium violaceum (strain ATCC 12472 / DSM 30191 / JCM 1249 / CCUG 213 / NBRC 12614 / NCIMB 9131 / NCTC 9757 / MK).